Reading from the N-terminus, the 276-residue chain is Type II pantothenate kinase (276 aa).

Residue 8-15 (DAGGTLTK) coordinates ATP. The Proton acceptor role is filled by glutamate 76. ATP-binding positions include threonine 105, 127-131 (GGTIM), phenylalanine 143, and serine 230.

It belongs to the type II pantothenate kinase family. In terms of assembly, homodimer.

It is found in the cytoplasm. It carries out the reaction (R)-pantothenate + ATP = (R)-4'-phosphopantothenate + ADP + H(+). Its pathway is cofactor biosynthesis; coenzyme A biosynthesis; CoA from (R)-pantothenate: step 1/5. Functionally, catalyzes the phosphorylation of pantothenate (Pan), the first step in CoA biosynthesis. The polypeptide is Type II pantothenate kinase (Bacillus thuringiensis subsp. konkukian (strain 97-27)).